The following is a 628-amino-acid chain: Alpha pinene synthase, chloroplastic (628 aa).

Residues Met-1–Arg-46 constitute a chloroplast transit peptide. Mg(2+) contacts are provided by Asp-381, Asp-385, and Glu-532. A DDXXD motif motif is present at residues Asp-381–Asp-385.

Belongs to the terpene synthase family. Tpsa subfamily. Mg(2+) serves as cofactor. The cofactor is Mn(2+).

Its subcellular location is the plastid. It localises to the chloroplast. It catalyses the reaction (2E)-geranyl diphosphate = alpha-pinene + diphosphate. The protein operates within secondary metabolite biosynthesis; terpenoid biosynthesis. Functionally, monoterpene synthase involved in the biosynthesis of volatile compounds. Mediates the conversion of (2E)-geranyl diphosphate (GPP) into alpha-pinene. This chain is Alpha pinene synthase, chloroplastic, found in Chamaecyparis formosensis (Formosan cypress).